The sequence spans 639 residues: Phosphomethylpyrimidine synthase (639 aa).

The disordered stretch occupies residues 49–71 (DTPTDFGGEQNRPVRVYDTSGPY). Residues N231, M260, Y289, H325, 345–347 (SRG), 386–389 (DGLR), and E425 contribute to the substrate site. H429 contacts Zn(2+). Substrate is bound at residue Y452. H493 contacts Zn(2+). 3 residues coordinate [4Fe-4S] cluster: C573, C576, and C581.

It belongs to the ThiC family. Homodimer. It depends on [4Fe-4S] cluster as a cofactor.

The catalysed reaction is 5-amino-1-(5-phospho-beta-D-ribosyl)imidazole + S-adenosyl-L-methionine = 4-amino-2-methyl-5-(phosphooxymethyl)pyrimidine + CO + 5'-deoxyadenosine + formate + L-methionine + 3 H(+). It participates in cofactor biosynthesis; thiamine diphosphate biosynthesis. Its function is as follows. Catalyzes the synthesis of the hydroxymethylpyrimidine phosphate (HMP-P) moiety of thiamine from aminoimidazole ribotide (AIR) in a radical S-adenosyl-L-methionine (SAM)-dependent reaction. This is Phosphomethylpyrimidine synthase from Teredinibacter turnerae (strain ATCC 39867 / T7901).